Reading from the N-terminus, the 529-residue chain is Bifunctional purine biosynthesis protein PurH (529 aa).

The MGS-like domain occupies 1–148 (MNNARPIRRA…KNHKDTTIIV (148 aa)).

It belongs to the PurH family.

It catalyses the reaction (6R)-10-formyltetrahydrofolate + 5-amino-1-(5-phospho-beta-D-ribosyl)imidazole-4-carboxamide = 5-formamido-1-(5-phospho-D-ribosyl)imidazole-4-carboxamide + (6S)-5,6,7,8-tetrahydrofolate. The catalysed reaction is IMP + H2O = 5-formamido-1-(5-phospho-D-ribosyl)imidazole-4-carboxamide. Its pathway is purine metabolism; IMP biosynthesis via de novo pathway; 5-formamido-1-(5-phospho-D-ribosyl)imidazole-4-carboxamide from 5-amino-1-(5-phospho-D-ribosyl)imidazole-4-carboxamide (10-formyl THF route): step 1/1. The protein operates within purine metabolism; IMP biosynthesis via de novo pathway; IMP from 5-formamido-1-(5-phospho-D-ribosyl)imidazole-4-carboxamide: step 1/1. The polypeptide is Bifunctional purine biosynthesis protein PurH (Shewanella halifaxensis (strain HAW-EB4)).